Consider the following 257-residue polypeptide: Putative hydro-lyase Bphy_2364 (257 aa).

The protein belongs to the D-glutamate cyclase family.

The chain is Putative hydro-lyase Bphy_2364 from Paraburkholderia phymatum (strain DSM 17167 / CIP 108236 / LMG 21445 / STM815) (Burkholderia phymatum).